Here is a 303-residue protein sequence, read N- to C-terminus: Glutamyl-Q tRNA(Asp) synthetase (303 aa).

L-glutamate-binding positions include 16–20 and E52; that span reads RFAPS. Positions 19-29 match the 'HIGH' region motif; the sequence is PSPSGPLHFGS. 4 residues coordinate Zn(2+): C108, C110, Y122, and C126. 2 residues coordinate L-glutamate: Y177 and R195. Residues 233 to 237 carry the 'KMSKS' region motif; the sequence is KLSKQ. Position 236 (K236) interacts with ATP.

This sequence belongs to the class-I aminoacyl-tRNA synthetase family. GluQ subfamily. It depends on Zn(2+) as a cofactor.

In terms of biological role, catalyzes the tRNA-independent activation of glutamate in presence of ATP and the subsequent transfer of glutamate onto a tRNA(Asp). Glutamate is transferred on the 2-amino-5-(4,5-dihydroxy-2-cyclopenten-1-yl) moiety of the queuosine in the wobble position of the QUC anticodon. This chain is Glutamyl-Q tRNA(Asp) synthetase, found in Vibrio vulnificus (strain YJ016).